The following is a 434-amino-acid chain: Glutamate/glutamine/aspartate/asparagine transport system permease protein BztC (434 aa).

10 consecutive transmembrane segments (helical) span residues leucine 41–leucine 61, leucine 113–proline 133, lysine 135–proline 155, isoleucine 156–leucine 176, leucine 180–alanine 200, phenylalanine 227–leucine 247, glycine 272–proline 292, leucine 298–isoleucine 318, isoleucine 360–phenylalanine 380, and glycine 398–methionine 418. The 196-residue stretch at phenylalanine 227–serine 422 folds into the ABC transmembrane type-1 domain.

This sequence belongs to the binding-protein-dependent transport system permease family. HisMQ subfamily. As to quaternary structure, bztB and BztC form a heterodimer which can form a membrane complex with a homodimer of BztD.

The protein localises to the cell inner membrane. Functionally, part of a binding-protein-dependent transport system for glutamate, glutamine, aspartate and asparagine. Probably responsible for the translocation of the substrate across the membrane. The polypeptide is Glutamate/glutamine/aspartate/asparagine transport system permease protein BztC (bztC) (Rhodobacter capsulatus (strain ATCC BAA-309 / NBRC 16581 / SB1003)).